Reading from the N-terminus, the 149-residue chain is Nucleoside diphosphate kinase (149 aa).

Residues K9, F57, R85, T91, R102, and N112 each coordinate ATP. Catalysis depends on H115, which acts as the Pros-phosphohistidine intermediate.

Belongs to the NDK family. Homotetramer. It depends on Mg(2+) as a cofactor.

The protein localises to the cytoplasm. It carries out the reaction a 2'-deoxyribonucleoside 5'-diphosphate + ATP = a 2'-deoxyribonucleoside 5'-triphosphate + ADP. It catalyses the reaction a ribonucleoside 5'-diphosphate + ATP = a ribonucleoside 5'-triphosphate + ADP. In terms of biological role, major role in the synthesis of nucleoside triphosphates other than ATP. The ATP gamma phosphate is transferred to the NDP beta phosphate via a ping-pong mechanism, using a phosphorylated active-site intermediate. The polypeptide is Nucleoside diphosphate kinase (Desulfitobacterium hafniense (strain Y51)).